The following is a 539-amino-acid chain: Phosphoenolpyruvate carboxykinase (ATP) (539 aa).

3 residues coordinate substrate: Arg61, Tyr195, and Lys201. Residues Lys201, His220, and Gly238 to Thr246 each bind ATP. Residues Lys201 and His220 each coordinate Mn(2+). Residue Asp259 participates in Mn(2+) binding. Residues Glu287, Arg325, and Thr450 each contribute to the ATP site. Position 325 (Arg325) interacts with substrate.

It belongs to the phosphoenolpyruvate carboxykinase (ATP) family. It depends on Mn(2+) as a cofactor.

Its subcellular location is the cytoplasm. It carries out the reaction oxaloacetate + ATP = phosphoenolpyruvate + ADP + CO2. Its pathway is carbohydrate biosynthesis; gluconeogenesis. Functionally, involved in the gluconeogenesis. Catalyzes the conversion of oxaloacetate (OAA) to phosphoenolpyruvate (PEP) through direct phosphoryl transfer between the nucleoside triphosphate and OAA. This is Phosphoenolpyruvate carboxykinase (ATP) from Methylobacterium radiotolerans (strain ATCC 27329 / DSM 1819 / JCM 2831 / NBRC 15690 / NCIMB 10815 / 0-1).